A 416-amino-acid chain; its full sequence is Protein LAZY 1 (416 aa).

The helical transmembrane segment at 63–83 (FTFGGSGLLTIGTLGIAAVAI) threads the bilayer. The IGT motif motif lies at 69–75 (GLLTIGT). Disordered stretches follow at residues 266–306 (AAAA…GMPA) and 337–361 (KKSRNRGATDNGGGAVATGDPDGPL). A compositionally biased stretch (gly residues) spans 270–282 (GVGGDRAGKGGGY). The Nuclear localization signal motif lies at 278-295 (KGGGYKTMKKRKVKDEKG).

Belongs to the LAZY family. Expressed specifically in the cells at the inner side of the vascular bundles of young leaf sheaths and peripheral cylinders of vascular bundles in the unelongated stems. Expressed in the leaf sheath pulvinus and the lamina joint.

It localises to the cell membrane. It is found in the nucleus. Its function is as follows. Involved in the regulation of shoot gravitropism and tiller angle through negative regulation of basipetal polar auxin transport (PAT). Acts as positive regulator of lateral auxin transport. Promotes vertical shoot growth. LAZY1 and TAC1 play opposite functions in the regulation of tiller growth angle. This chain is Protein LAZY 1, found in Oryza sativa subsp. japonica (Rice).